We begin with the raw amino-acid sequence, 144 residues long: Cysteine-rich tail protein 1 (144 aa).

The disordered stretch occupies residues 51–105; it reads APEPTHLLQPTEVPGPKGAKGNQGAAPIQNQQAWQQPGNPYSSSQRQAGLTYAGP. The span at 78 to 98 shows a compositional bias: polar residues; it reads IQNQQAWQQPGNPYSSSQRQA.

It belongs to the CYSRT1 family. As to quaternary structure, interacts with LCE1B; the interaction is direct. Interacts with LCE2C; the interaction is direct. Interacts with LCE3A; the interaction is direct. Interacts with LCE3C; the interaction is direct. Interacts with LCE4A; the interaction is direct. Interacts with LCE5A; the interaction is direct. Interacts with LCE1C. Interacts with LCE1D. Interacts with LCE1E. Interacts with LCE2A. Interacts with LCE3D. Interacts with LCE3E. Interacts with LCE1A. As to expression, expressed in the stratum granulosum, in skin and oral epithelia (at protein level).

It localises to the cornified envelope. Its function is as follows. Component of the stratum corneum that may contribute to epidermal antimicrobial host defenses. In Homo sapiens (Human), this protein is Cysteine-rich tail protein 1 (CYSRT1).